The following is a 585-amino-acid chain: Folylpolyglutamate synthase, mitochondrial (585 aa).

A mitochondrion-targeting transit peptide spans M1–D39. G103–S106 lines the ATP pocket. 3 residues coordinate Mg(2+): S127, E198, and H226. Residues R361 and D375 each coordinate ATP. A disordered region spans residues E477 to S497. At S537 the chain carries Phosphoserine.

This sequence belongs to the folylpolyglutamate synthase family. In terms of assembly, monomer. The cofactor is a monovalent cation.

The protein localises to the mitochondrion inner membrane. Its subcellular location is the mitochondrion matrix. The protein resides in the cytoplasm. The catalysed reaction is (6S)-5,6,7,8-tetrahydrofolyl-(gamma-L-Glu)(n) + L-glutamate + ATP = (6S)-5,6,7,8-tetrahydrofolyl-(gamma-L-Glu)(n+1) + ADP + phosphate + H(+). It functions in the pathway cofactor biosynthesis; tetrahydrofolylpolyglutamate biosynthesis. In terms of biological role, catalyzes conversion of folates to polyglutamate derivatives allowing concentration of folate compounds in the cell and the intracellular retention of these cofactors, which are important substrates for most of the folate-dependent enzymes that are involved in one-carbon transfer reactions involved in purine, pyrimidine and amino acid synthesis. This chain is Folylpolyglutamate synthase, mitochondrial (FPGS), found in Bos taurus (Bovine).